A 1982-amino-acid chain; its full sequence is CASP8-associated protein 2 (1982 aa).

A2 carries the post-translational modification N-acetylalanine. S20 is subject to Phosphoserine. Basic and acidic residues predominate over residues 159 to 191; sequence VKTKDLKSRSPHLDDCSKTDHRAKSDVSKDVHH. Residues 159-552 are disordered; that stretch reads VKTKDLKSRS…ESGPNETKNK (394 aa). S194 is modified (phosphoserine). Basic and acidic residues predominate over residues 198–210; sequence LEKEGKPHSDKRS. Positions 225–240 are enriched in polar residues; the sequence is GVWSRSHYQVGEGSSN. A compositionally biased stretch (basic and acidic residues) spans 286 to 395; that stretch reads GHPEKYGKGE…ERASLPHSKN (110 aa). Polar residues predominate over residues 396 to 405; it reads EITFSHNSSK. Basic and acidic residues-rich tracts occupy residues 406–423, 444–455, and 463–524; these read YHLE…DKSV, KNIDSKEVDAMH, and KAER…KGEV. The residue at position 567 (S567) is a Phosphoserine. The interval 569-593 is disordered; the sequence is AKKQPVSQDNQHKITDIPKSSGVCD. S658, S815, and S875 each carry phosphoserine. Disordered stretches follow at residues 875–1017, 1157–1188, and 1251–1283; these read SPPQ…DKVM, FGRD…DNSN, and ERSL…HATL. Over residues 894-904 the composition is skewed to polar residues; sequence SAHSTSKSQSD. Basic and acidic residues-rich tracts occupy residues 905–924, 936–965, 999–1016, and 1157–1170; these read LNKE…EADT, GEIR…DVRK, KRPD…KDKV, and FGRD…EKTS. S940 carries the post-translational modification Phosphoserine. Phosphoserine is present on S1161. Polar residues-rich tracts occupy residues 1171–1181 and 1269–1281; these read KQNAQYSNSQK and GSSI…SQHA. An N6-acetyllysine modification is found at K1343. The SUMO interaction motif 1 (SIM); mediates the binding to polysumoylated substrates motif lies at 1683 to 1687; the sequence is YVDLT. The segment at 1709 to 1982 is NCOA2-binding; the sequence is DQLGCSGGNL…MKLFEKSKCR (274 aa). The short motif at 1737–1741 is the SUMO interaction motif 2 (SIM); mediates the binding to polysumoylated substrates element; it reads FIDLT. Positions 1794–1798 match the SUMO interaction motif 3 (SIM); mediates the binding to polysumoylated substrates motif; it reads YIDLT. A disordered region spans residues 1803–1909; that stretch reads SSCEVKKDEL…IKDSSAALAT (107 aa). Residues 1851 to 1865 show a composition bias toward basic and acidic residues; that stretch reads KETDLTNKEKTKKPT.

In terms of assembly, self-associates. Component of the death-inducing signaling complex (DISC) with CASP8, FADD and FAS. Interacts with NCOA2 and NCOA3. Interacts with SRRT. Interacts with TRAF2. Interacts with NPAT. Interacts (via SIM domains) with SUMO1 and SUMO2. Interacts with SP100; may negatively regulate CASP8AP2 export from the nucleus to the cytoplasm.

Its subcellular location is the cytoplasm. It localises to the nucleus. It is found in the PML body. The protein localises to the mitochondrion. In terms of biological role, participates in TNF-alpha-induced blockade of glucocorticoid receptor (GR) transactivation at the nuclear receptor coactivator level, upstream and independently of NF-kappa-B. Suppresses both NCOA2- and NCOA3-induced enhancement of GR transactivation. Involved in TNF-alpha-induced activation of NF-kappa-B via a TRAF2-dependent pathway. Acts as a downstream mediator for CASP8-induced activation of NF-kappa-B. Required for the activation of CASP8 in FAS-mediated apoptosis. Required for histone gene transcription and progression through S phase. The polypeptide is CASP8-associated protein 2 (Homo sapiens (Human)).